Consider the following 58-residue polypeptide: MSTIKIKQVKSRIGAPADQKRVLDALGLRKMNRVVEHEATPSILGMVEKVKHLVAIVK.

It belongs to the universal ribosomal protein uL30 family. Part of the 50S ribosomal subunit.

The sequence is that of Large ribosomal subunit protein uL30 from Phocaeicola vulgatus (strain ATCC 8482 / DSM 1447 / JCM 5826 / CCUG 4940 / NBRC 14291 / NCTC 11154) (Bacteroides vulgatus).